Here is a 98-residue protein sequence, read N- to C-terminus: MSKVCEISGKRPIVANSIQRRGKAKREGGVGKKTTGISKRRQYPNLQKVRVRVAGQEITFRVAASHIPKVYELVERAKGLRLEGLSPKEIKKELLKLL.

Belongs to the bacterial ribosomal protein bL28 family.

The sequence is that of Large ribosomal subunit protein bL28 from Thermus thermophilus (strain ATCC BAA-163 / DSM 7039 / HB27).